A 317-amino-acid chain; its full sequence is Ferrochelatase (317 aa).

Residues histidine 192 and glutamate 271 each contribute to the Fe cation site.

It belongs to the ferrochelatase family.

The protein localises to the cytoplasm. The catalysed reaction is heme b + 2 H(+) = protoporphyrin IX + Fe(2+). It functions in the pathway porphyrin-containing compound metabolism; protoheme biosynthesis; protoheme from protoporphyrin-IX: step 1/1. Its function is as follows. Catalyzes the ferrous insertion into protoporphyrin IX. This is Ferrochelatase from Citrifermentans bemidjiense (strain ATCC BAA-1014 / DSM 16622 / JCM 12645 / Bem) (Geobacter bemidjiensis).